The following is a 430-amino-acid chain: Alpha-(1-&gt;3)-arabinofuranosyltransferase (430 aa).

Helical transmembrane passes span 26–46 (APST…LSVI), 114–134 (WYIS…LRIF), 136–156 (YTLS…TESV), 160–180 (LVFT…FRWL), 194–214 (AIGL…LPVL), 218–238 (FYTL…AWPL), 276–296 (WLIL…LWLL), 307–327 (FWLL…LSLG), 352–372 (WPAW…LGHW), and 381–401 (YMKI…VLYF).

It belongs to the glycosyltransferase 87 family.

The protein resides in the cell membrane. The enzyme catalyses Adds an alpha-D-arabinofuranosyl group from trans,octacis-decaprenylphospho-beta-D-arabinofuranose at the 3-O-position of an alpha-(1-&gt;5)-arabinofuranan chain attached to a beta-(1-&gt;5)-galactofuranan chain.. Its pathway is cell wall biogenesis; cell wall polysaccharide biosynthesis. Involved in the biosynthesis of the arabinogalactan (AG) region of the mycolylarabinogalactan-peptidoglycan (mAGP) complex, an essential component of the mycobacterial cell wall. Catalyzes the addition of an arabinofuranosyl (Araf) residue from the sugar donor beta-D-arabinofuranosyl-1-monophosphoryldecaprenol (DPA) on the C-3 of an alpha-(1-&gt;5)-linked Araf from the arabinan backbone of AG. The chain is Alpha-(1-&gt;3)-arabinofuranosyltransferase (aftC) from Mycolicibacterium smegmatis (strain ATCC 700084 / mc(2)155) (Mycobacterium smegmatis).